Reading from the N-terminus, the 123-residue chain is uncharacterized protein (123 aa).

A Rhodanese domain is found at 17–117 (SNDNAFLVDV…NNQDKGWKQN (101 aa)).

This is an uncharacterized protein from Rickettsia rickettsii.